The primary structure comprises 60 residues: Large ribosomal subunit protein uL30 (60 aa).

Belongs to the universal ribosomal protein uL30 family. Part of the 50S ribosomal subunit.

The sequence is that of Large ribosomal subunit protein uL30 from Desulforapulum autotrophicum (strain ATCC 43914 / DSM 3382 / VKM B-1955 / HRM2) (Desulfobacterium autotrophicum).